The chain runs to 419 residues: Glucose-1-phosphate adenylyltransferase (419 aa).

Residues Tyr107, Gly172, 187 to 188, and Ser205 each bind alpha-D-glucose 1-phosphate; that span reads EK.

Belongs to the bacterial/plant glucose-1-phosphate adenylyltransferase family. Homotetramer.

The enzyme catalyses alpha-D-glucose 1-phosphate + ATP + H(+) = ADP-alpha-D-glucose + diphosphate. Its pathway is glycan biosynthesis; glycogen biosynthesis. Functionally, involved in the biosynthesis of ADP-glucose, a building block required for the elongation reactions to produce glycogen. Catalyzes the reaction between ATP and alpha-D-glucose 1-phosphate (G1P) to produce pyrophosphate and ADP-Glc. The chain is Glucose-1-phosphate adenylyltransferase from Novosphingobium aromaticivorans (strain ATCC 700278 / DSM 12444 / CCUG 56034 / CIP 105152 / NBRC 16084 / F199).